The primary structure comprises 364 residues: Dual-specificity RNA methyltransferase RlmN (364 aa).

The Proton acceptor role is filled by glutamate 91. Residues 97–333 enclose the Radical SAM core domain; sequence ESDRGTLCIS…VTVRKTRGDD (237 aa). Cysteine 104 and cysteine 338 are joined by a disulfide. The [4Fe-4S] cluster site is built by cysteine 111, cysteine 115, and cysteine 118. S-adenosyl-L-methionine contacts are provided by residues 164–165, serine 196, 218–220, and asparagine 295; these read GE and SLH. The S-methylcysteine intermediate role is filled by cysteine 338.

It belongs to the radical SAM superfamily. RlmN family. The cofactor is [4Fe-4S] cluster.

It localises to the cytoplasm. The enzyme catalyses adenosine(2503) in 23S rRNA + 2 reduced [2Fe-2S]-[ferredoxin] + 2 S-adenosyl-L-methionine = 2-methyladenosine(2503) in 23S rRNA + 5'-deoxyadenosine + L-methionine + 2 oxidized [2Fe-2S]-[ferredoxin] + S-adenosyl-L-homocysteine. The catalysed reaction is adenosine(37) in tRNA + 2 reduced [2Fe-2S]-[ferredoxin] + 2 S-adenosyl-L-methionine = 2-methyladenosine(37) in tRNA + 5'-deoxyadenosine + L-methionine + 2 oxidized [2Fe-2S]-[ferredoxin] + S-adenosyl-L-homocysteine. In terms of biological role, specifically methylates position 2 of adenine 2503 in 23S rRNA and position 2 of adenine 37 in tRNAs. m2A2503 modification seems to play a crucial role in the proofreading step occurring at the peptidyl transferase center and thus would serve to optimize ribosomal fidelity. In Neisseria meningitidis serogroup B (strain ATCC BAA-335 / MC58), this protein is Dual-specificity RNA methyltransferase RlmN.